The primary structure comprises 61 residues: Small ribosomal subunit protein uS14 (61 aa).

Cys-24, Cys-27, Cys-40, and Cys-43 together coordinate Zn(2+).

This sequence belongs to the universal ribosomal protein uS14 family. Zinc-binding uS14 subfamily. In terms of assembly, part of the 30S ribosomal subunit. Contacts proteins S3 and S10. The cofactor is Zn(2+).

Binds 16S rRNA, required for the assembly of 30S particles and may also be responsible for determining the conformation of the 16S rRNA at the A site. This Geotalea daltonii (strain DSM 22248 / JCM 15807 / FRC-32) (Geobacter daltonii) protein is Small ribosomal subunit protein uS14.